The chain runs to 332 residues: Cilia- and flagella-associated protein 119 (332 aa).

Positions 1-10 (MITPRSSQSL) are enriched in polar residues. Disordered regions lie at residues 1-70 (MITP…ANLF), 246-271 (EDEEATVEQAATPQEEEPEAVTEAEQ), and 308-332 (RLSNRLAALERPYQTPPSKGKSKAK). Basic and acidic residues predominate over residues 14 to 30 (VQTELEHSPKLQEEPDR). Polar residues predominate over residues 49-58 (ESPAEATSSP). Residues 287–308 (LNKELRQLQQLVEERLKESEER) adopt a coiled-coil conformation.

In terms of tissue distribution, specifically expressed in testis (at protein level).

Its subcellular location is the cell projection. The protein localises to the cilium. The protein resides in the flagellum. It localises to the cytoplasmic vesicle. It is found in the secretory vesicle. Its subcellular location is the acrosome. The protein localises to the cytoplasm. The polypeptide is Cilia- and flagella-associated protein 119 (Rattus norvegicus (Rat)).